The following is a 79-amino-acid chain: RNA-binding protein Hfq (79 aa).

The Sm domain maps to 10–70 (DVFLNTVRKQ…ISTIMPGQPV (61 aa)).

This sequence belongs to the Hfq family. As to quaternary structure, homohexamer.

In terms of biological role, RNA chaperone that binds small regulatory RNA (sRNAs) and mRNAs to facilitate mRNA translational regulation in response to envelope stress, environmental stress and changes in metabolite concentrations. Also binds with high specificity to tRNAs. The sequence is that of RNA-binding protein Hfq from Bartonella quintana (strain Toulouse) (Rochalimaea quintana).